A 437-amino-acid polypeptide reads, in one-letter code: Ribosomal protein uS12 methylthiotransferase RimO (437 aa).

The 120-residue stretch at 9–128 (NKINVITLGC…LLKALGADYK (120 aa)) folds into the MTTase N-terminal domain. [4Fe-4S] cluster contacts are provided by Cys-18, Cys-57, Cys-91, Cys-152, Cys-156, and Cys-159. Residues 138–368 (TTPKNYAYLK…MELQSQISWD (231 aa)) form the Radical SAM core domain. The region spanning 371-437 (QEKVGQVFRC…TEFDLYGEPA (67 aa)) is the TRAM domain.

Belongs to the methylthiotransferase family. RimO subfamily. The cofactor is [4Fe-4S] cluster.

The protein resides in the cytoplasm. The enzyme catalyses L-aspartate(89)-[ribosomal protein uS12]-hydrogen + (sulfur carrier)-SH + AH2 + 2 S-adenosyl-L-methionine = 3-methylsulfanyl-L-aspartate(89)-[ribosomal protein uS12]-hydrogen + (sulfur carrier)-H + 5'-deoxyadenosine + L-methionine + A + S-adenosyl-L-homocysteine + 2 H(+). Catalyzes the methylthiolation of an aspartic acid residue of ribosomal protein uS12. This Flavobacterium johnsoniae (strain ATCC 17061 / DSM 2064 / JCM 8514 / BCRC 14874 / CCUG 350202 / NBRC 14942 / NCIMB 11054 / UW101) (Cytophaga johnsonae) protein is Ribosomal protein uS12 methylthiotransferase RimO.